The primary structure comprises 189 residues: Glucose-6-phosphate isomerase (189 aa).

4 residues coordinate Fe cation: His88, His90, Glu97, and His136.

Belongs to the archaeal-type GPI family. Homodimer.

The protein resides in the cytoplasm. The catalysed reaction is alpha-D-glucose 6-phosphate = beta-D-fructose 6-phosphate. It functions in the pathway carbohydrate degradation; glycolysis; D-glyceraldehyde 3-phosphate and glycerone phosphate from D-glucose: step 2/4. The protein is Glucose-6-phosphate isomerase of Thermococcus gammatolerans (strain DSM 15229 / JCM 11827 / EJ3).